The primary structure comprises 250 residues: 7-cyano-7-deazaguanine synthase (250 aa).

Position 21–31 (21–31) interacts with ATP; sequence FSGGQDSSVCL. Zn(2+)-binding residues include cysteine 209, cysteine 224, cysteine 227, and cysteine 230.

Belongs to the QueC family. It depends on Zn(2+) as a cofactor.

It carries out the reaction 7-carboxy-7-deazaguanine + NH4(+) + ATP = 7-cyano-7-deazaguanine + ADP + phosphate + H2O + H(+). It participates in purine metabolism; 7-cyano-7-deazaguanine biosynthesis. Its function is as follows. Catalyzes the ATP-dependent conversion of 7-carboxy-7-deazaguanine (CDG) to 7-cyano-7-deazaguanine (preQ(0)). In Caulobacter sp. (strain K31), this protein is 7-cyano-7-deazaguanine synthase.